The following is a 462-amino-acid chain: Threonine--tRNA ligase, mitochondrial (462 aa).

The N-terminal 45 residues, 1 to 45 (MKIQLVRWHCSRNALWNRAFYSTRKATKNASSATPATMTSMVSQR), are a transit peptide targeting the mitochondrion.

Belongs to the class-II aminoacyl-tRNA synthetase family.

The protein resides in the mitochondrion matrix. It catalyses the reaction tRNA(Thr) + L-threonine + ATP = L-threonyl-tRNA(Thr) + AMP + diphosphate + H(+). This is Threonine--tRNA ligase, mitochondrial (MST1) from Saccharomyces cerevisiae (strain ATCC 204508 / S288c) (Baker's yeast).